The chain runs to 470 residues: AAA-ATPase At5g40000 (470 aa).

Residues 1 to 30 (MMMMGDSFGSIGSSMASLFFLWATIQQIFP) form the signal peptide. 248–255 (GPPGTGKS) lines the ATP pocket.

This sequence belongs to the AAA ATPase family. BCS1 subfamily. Mg(2+) is required as a cofactor.

The enzyme catalyses ATP + H2O = ADP + phosphate + H(+). This is AAA-ATPase At5g40000 from Arabidopsis thaliana (Mouse-ear cress).